The sequence spans 539 residues: CTP synthase (539 aa).

An amidoligase domain region spans residues Met-1 to Phe-268. Position 14 (Ser-14) interacts with CTP. Ser-14 lines the UTP pocket. Ser-15 to Leu-20 is an ATP binding site. Residue Tyr-55 participates in L-glutamine binding. Asp-72 provides a ligand contact to ATP. Mg(2+) is bound by residues Asp-72 and Glu-142. CTP-binding positions include Asp-149–Glu-151, Lys-188–Gln-193, and Lys-224. UTP-binding positions include Lys-188 to Gln-193 and Lys-224. Leu-242 contacts ATP. The Glutamine amidotransferase type-1 domain occupies Arg-294 to Glu-532. An L-glutamine-binding site is contributed by Gly-353. Cys-380 serves as the catalytic Nucleophile; for glutamine hydrolysis. Residues Leu-381–Gln-384, Glu-404, and Arg-460 each bind L-glutamine. Residues His-505 and Glu-507 contribute to the active site.

Belongs to the CTP synthase family. In terms of assembly, homotetramer.

The enzyme catalyses UTP + L-glutamine + ATP + H2O = CTP + L-glutamate + ADP + phosphate + 2 H(+). It carries out the reaction L-glutamine + H2O = L-glutamate + NH4(+). The catalysed reaction is UTP + NH4(+) + ATP = CTP + ADP + phosphate + 2 H(+). It participates in pyrimidine metabolism; CTP biosynthesis via de novo pathway; CTP from UDP: step 2/2. Allosterically activated by GTP, when glutamine is the substrate; GTP has no effect on the reaction when ammonia is the substrate. The allosteric effector GTP functions by stabilizing the protein conformation that binds the tetrahedral intermediate(s) formed during glutamine hydrolysis. Inhibited by the product CTP, via allosteric rather than competitive inhibition. In terms of biological role, catalyzes the ATP-dependent amination of UTP to CTP with either L-glutamine or ammonia as the source of nitrogen. May be involved in lipopolysaccharide biosynthesis, potentially channelling CTP directly to CMP-KDO synthetase. Regulates intracellular CTP levels through interactions with the four ribonucleotide triphosphates. In Chlamydia trachomatis serovar D (strain ATCC VR-885 / DSM 19411 / UW-3/Cx), this protein is CTP synthase.